The following is a 531-amino-acid chain: Transporter mfs1 (531 aa).

The next 10 membrane-spanning stretches (helical) occupy residues Leu-83–Phe-103, Val-119–Phe-139, Leu-158–Leu-178, Phe-182–Ile-202, Phe-214–Val-234, Trp-241–Met-261, Ile-325–Phe-345, Leu-358–Leu-378, Ile-398–Trp-418, and Val-424–Phe-444. A glycan (N-linked (GlcNAc...) asparagine) is linked at Asn-486. A helical membrane pass occupies residues Gly-496 to Ile-516.

This sequence belongs to the major facilitator superfamily. CAR1 family.

It is found in the endoplasmic reticulum. The protein localises to the membrane. The sequence is that of Transporter mfs1 (mfs1) from Schizosaccharomyces pombe (strain 972 / ATCC 24843) (Fission yeast).